Here is a 310-residue protein sequence, read N- to C-terminus: 4-hydroxy-3-methylbut-2-enyl diphosphate reductase (310 aa).

C12 provides a ligand contact to [4Fe-4S] cluster. (2E)-4-hydroxy-3-methylbut-2-enyl diphosphate-binding residues include H41 and H74. 2 residues coordinate dimethylallyl diphosphate: H41 and H74. The isopentenyl diphosphate site is built by H41 and H74. [4Fe-4S] cluster is bound at residue C96. H124 contacts (2E)-4-hydroxy-3-methylbut-2-enyl diphosphate. H124 is a dimethylallyl diphosphate binding site. Position 124 (H124) interacts with isopentenyl diphosphate. E126 (proton donor) is an active-site residue. A (2E)-4-hydroxy-3-methylbut-2-enyl diphosphate-binding site is contributed by T167. Residue C197 participates in [4Fe-4S] cluster binding. S225, S226, N227, and S269 together coordinate (2E)-4-hydroxy-3-methylbut-2-enyl diphosphate. Residues S225, S226, N227, and S269 each coordinate dimethylallyl diphosphate. 4 residues coordinate isopentenyl diphosphate: S225, S226, N227, and S269.

This sequence belongs to the IspH family. It depends on [4Fe-4S] cluster as a cofactor.

It carries out the reaction isopentenyl diphosphate + 2 oxidized [2Fe-2S]-[ferredoxin] + H2O = (2E)-4-hydroxy-3-methylbut-2-enyl diphosphate + 2 reduced [2Fe-2S]-[ferredoxin] + 2 H(+). The catalysed reaction is dimethylallyl diphosphate + 2 oxidized [2Fe-2S]-[ferredoxin] + H2O = (2E)-4-hydroxy-3-methylbut-2-enyl diphosphate + 2 reduced [2Fe-2S]-[ferredoxin] + 2 H(+). It participates in isoprenoid biosynthesis; dimethylallyl diphosphate biosynthesis; dimethylallyl diphosphate from (2E)-4-hydroxy-3-methylbutenyl diphosphate: step 1/1. The protein operates within isoprenoid biosynthesis; isopentenyl diphosphate biosynthesis via DXP pathway; isopentenyl diphosphate from 1-deoxy-D-xylulose 5-phosphate: step 6/6. Functionally, catalyzes the conversion of 1-hydroxy-2-methyl-2-(E)-butenyl 4-diphosphate (HMBPP) into a mixture of isopentenyl diphosphate (IPP) and dimethylallyl diphosphate (DMAPP). Acts in the terminal step of the DOXP/MEP pathway for isoprenoid precursor biosynthesis. This is 4-hydroxy-3-methylbut-2-enyl diphosphate reductase from Tolumonas auensis (strain DSM 9187 / NBRC 110442 / TA 4).